The following is a 77-amino-acid chain: Adipokinetic prohormone type 3 (77 aa).

The N-terminal stretch at 1 to 22 is a signal peptide; the sequence is MQVRAVLVLAVVALVAVATSRA. At Gln-23 the chain carries Pyrrolidone carboxylic acid. At Trp-30 the chain carries Tryptophan amide.

Belongs to the AKH/HRTH/RPCH family.

It is found in the secreted. This hormone, released from cells in the corpora cardiaca, causes release of diglycerides from the fat body and stimulation of muscles to use these diglycerides as an energy source during energy-demanding processes. The protein is Adipokinetic prohormone type 3 of Locusta migratoria (Migratory locust).